Here is an 88-residue protein sequence, read N- to C-terminus: Defensin-like protein 98 (88 aa).

An N-terminal signal peptide occupies residues 1-29 (MGSLRVSTVVIAVVACLSILLISPTEVDG). 4 cysteine pairs are disulfide-bonded: Cys33–Cys76, Cys40–Cys62, Cys46–Cys73, and Cys50–Cys75.

The protein belongs to the DEFL family.

Its subcellular location is the secreted. This Arabidopsis thaliana (Mouse-ear cress) protein is Defensin-like protein 98.